The primary structure comprises 164 residues: SsrA-binding protein (164 aa).

Residues 141 to 164 are disordered; that stretch reads KLHDKRQDEKQKSIKKEINSALKR. Residues 145–158 are compositionally biased toward basic and acidic residues; it reads KRQDEKQKSIKKEI.

The protein belongs to the SmpB family.

It localises to the cytoplasm. Required for rescue of stalled ribosomes mediated by trans-translation. Binds to transfer-messenger RNA (tmRNA), required for stable association of tmRNA with ribosomes. tmRNA and SmpB together mimic tRNA shape, replacing the anticodon stem-loop with SmpB. tmRNA is encoded by the ssrA gene; the 2 termini fold to resemble tRNA(Ala) and it encodes a 'tag peptide', a short internal open reading frame. During trans-translation Ala-aminoacylated tmRNA acts like a tRNA, entering the A-site of stalled ribosomes, displacing the stalled mRNA. The ribosome then switches to translate the ORF on the tmRNA; the nascent peptide is terminated with the 'tag peptide' encoded by the tmRNA and targeted for degradation. The ribosome is freed to recommence translation, which seems to be the essential function of trans-translation. The polypeptide is SsrA-binding protein (Prochlorococcus marinus (strain AS9601)).